The following is a 306-amino-acid chain: Pantothenate kinase (306 aa).

91 to 98 (GSVAVGKS) serves as a coordination point for ATP.

This sequence belongs to the prokaryotic pantothenate kinase family.

The protein resides in the cytoplasm. The catalysed reaction is (R)-pantothenate + ATP = (R)-4'-phosphopantothenate + ADP + H(+). It functions in the pathway cofactor biosynthesis; coenzyme A biosynthesis; CoA from (R)-pantothenate: step 1/5. The chain is Pantothenate kinase from Streptococcus thermophilus (strain ATCC BAA-491 / LMD-9).